Consider the following 101-residue polypeptide: Aspartyl/glutamyl-tRNA(Asn/Gln) amidotransferase subunit C (101 aa).

Belongs to the GatC family. As to quaternary structure, heterotrimer of A, B and C subunits.

It carries out the reaction L-glutamyl-tRNA(Gln) + L-glutamine + ATP + H2O = L-glutaminyl-tRNA(Gln) + L-glutamate + ADP + phosphate + H(+). The catalysed reaction is L-aspartyl-tRNA(Asn) + L-glutamine + ATP + H2O = L-asparaginyl-tRNA(Asn) + L-glutamate + ADP + phosphate + 2 H(+). Its function is as follows. Allows the formation of correctly charged Asn-tRNA(Asn) or Gln-tRNA(Gln) through the transamidation of misacylated Asp-tRNA(Asn) or Glu-tRNA(Gln) in organisms which lack either or both of asparaginyl-tRNA or glutaminyl-tRNA synthetases. The reaction takes place in the presence of glutamine and ATP through an activated phospho-Asp-tRNA(Asn) or phospho-Glu-tRNA(Gln). This Lactococcus lactis subsp. cremoris (strain MG1363) protein is Aspartyl/glutamyl-tRNA(Asn/Gln) amidotransferase subunit C.